We begin with the raw amino-acid sequence, 492 residues long: ATP synthase subunit beta, chloroplastic (492 aa).

170–177 (GGAGVGKT) provides a ligand contact to ATP.

This sequence belongs to the ATPase alpha/beta chains family. F-type ATPases have 2 components, CF(1) - the catalytic core - and CF(0) - the membrane proton channel. CF(1) has five subunits: alpha(3), beta(3), gamma(1), delta(1), epsilon(1). CF(0) has four main subunits: a(1), b(1), b'(1) and c(9-12).

It is found in the plastid. The protein localises to the chloroplast thylakoid membrane. The enzyme catalyses ATP + H2O + 4 H(+)(in) = ADP + phosphate + 5 H(+)(out). Produces ATP from ADP in the presence of a proton gradient across the membrane. The catalytic sites are hosted primarily by the beta subunits. The polypeptide is ATP synthase subunit beta, chloroplastic (Huperzia lucidula (Shining clubmoss)).